The sequence spans 231 residues: PIAGSMVLAAVLLKLGGYGIIRMMQTLPTTKTDMFLPFIVLALWGAILANLTCLQQTDLKSLIAYSSISHMGLVVAAIIIQTPWGLSGAMALMIAHGFTSSALFCLANTTYERTHTRILILTRGFHNILPMTTTWWLLANLMNIATPPTLNFTSELLIMSTLFNWCPTTIILLGLSMLITASYSLHMFLSTQMGPTLLNNQTEPMHSREHLLMALHLVPLMMISMKPELII.

Transmembrane regions (helical) follow at residues 1-21 (PIAG…YGII), 34-54 (MFLP…LTCL), 63-85 (IAYS…TPWG), 89-111 (AMAL…NTTY), 128-148 (ILPM…ATPP), 169-189 (TIIL…HMFL), and 211-231 (LLMA…ELII).

The protein belongs to the complex I subunit 4 family.

It localises to the mitochondrion membrane. The catalysed reaction is a ubiquinone + NADH + 5 H(+)(in) = a ubiquinol + NAD(+) + 4 H(+)(out). Its function is as follows. Core subunit of the mitochondrial membrane respiratory chain NADH dehydrogenase (Complex I) that is believed to belong to the minimal assembly required for catalysis. Complex I functions in the transfer of electrons from NADH to the respiratory chain. The immediate electron acceptor for the enzyme is believed to be ubiquinone. This chain is NADH-ubiquinone oxidoreductase chain 4 (MT-ND4), found in Cerrophidion godmani (Porthidium godmani).